We begin with the raw amino-acid sequence, 172 residues long: Translationally-controlled tumor protein (172 aa).

The region spanning Met1–Cys172 is the TCTP domain. Residues Ser46 and Ser53 each carry the phosphoserine modification. At Ser64 the chain carries Phosphoserine; by PLK1. The interval Val70 to Cys172 is required for reduction of TSC22D1 protein stability.

The protein belongs to the TCTP family. In terms of assembly, homodimer. Interacts with STEAP3. Interacts with TSC22D1; interaction results in the destabilization of TSC22D1 protein.

Its subcellular location is the cytoplasm. Functionally, involved in calcium binding and microtubule stabilization. Acts as a negative regulator of TSC22D1-mediated apoptosis, via interaction with and destabilization of TSC22D1 protein. This Mus musculus (Mouse) protein is Translationally-controlled tumor protein (Tpt1).